The chain runs to 214 residues: MGKRIGLFGGTFDPVHIGHMRSAVEMAEQFALDELRLLPNARPPHRDAPQVSAAQRLAMVERAVAGVERLTVDARELLRDKPSYTIDTLESVRAELAADDQLFMLIGWDAFCGLPTWHRWEALLEHCHIIVLQRPDADSEPPEALRDLLAARSVADPRALKGPGGQITFVWQTPLAVSATQIRALLGNGRSVRFLVPDAVLNYIEAHHLYRAPH.

Belongs to the NadD family.

It carries out the reaction nicotinate beta-D-ribonucleotide + ATP + H(+) = deamido-NAD(+) + diphosphate. Its pathway is cofactor biosynthesis; NAD(+) biosynthesis; deamido-NAD(+) from nicotinate D-ribonucleotide: step 1/1. Its function is as follows. Catalyzes the reversible adenylation of nicotinate mononucleotide (NaMN) to nicotinic acid adenine dinucleotide (NaAD). The chain is Probable nicotinate-nucleotide adenylyltransferase from Pseudomonas paraeruginosa (strain DSM 24068 / PA7) (Pseudomonas aeruginosa (strain PA7)).